Here is a 481-residue protein sequence, read N- to C-terminus: Proton-coupled amino acid transporter 2 (481 aa).

At 1–56 (MSVTKSAGSPQVAATVKLDLVSFPESAKKVQSQDPNPVNGSSSESSEKTKGITGFQ) the chain is on the cytoplasmic side. The disordered stretch occupies residues 26–49 (SAKKVQSQDPNPVNGSSSESSEKT). Polar residues predominate over residues 29–40 (KVQSQDPNPVNG). A helical transmembrane segment spans residues 57–77 (TLVHLVKGNMGTGILGLPLAV). Over 78–79 (KN) the chain is Extracellular. A helical transmembrane segment spans residues 80–100 (AGILMGPLSLLVMGLIACHCM). Over 101-146 (HILVRCAQRFCHRLNKPFMDYGDTVMHGLASSPNTWLQSHAHWGRH) the chain is Cytoplasmic. A helical transmembrane segment spans residues 147-167 (AVSFFLIVTQLGFCCVYIVFL). At 168 to 195 (ADNLKQVVEAVNSTTISCHKNETVVLTP) the chain is on the extracellular side. The helical transmembrane segment at 196 to 216 (TIDSRLYMLAFLPVLGLLVFI) threads the bilayer. Over 217 to 220 (RNLR) the chain is Cytoplasmic. Residues 221-241 (VLTIFSLLANVSMLVSLVIIG) form a helical membrane-spanning segment. Residues 242-262 (QYIIQGIPDPSQLPLVASWKT) are Extracellular-facing. The helical transmembrane segment at 263–283 (YPLFFGTAIFSFESIGVVLPL) threads the bilayer. Residues 284–295 (ENKMKDARRFPT) are Cytoplasmic-facing. A helical membrane pass occupies residues 296–316 (ILSLGMSIITTLYIAIGALGY). The Extracellular portion of the chain corresponds to 317-343 (LRFGDDIKASITLNLPNCWLYQSVKLL). A helical membrane pass occupies residues 344 to 364 (YVVGILCTHALQFYVPAEIII). Residues 365 to 377 (PLAVSQVSKRWAL) are Cytoplasmic-facing. The helical transmembrane segment at 378–398 (PVDLSIRLALVCVTCMLAILI) threads the bilayer. At 399 to 402 (PRLD) the chain is on the extracellular side. Residues 403 to 423 (LVLSLVGSVSSSALALIIPPL) form a helical membrane-spanning segment. Over 424-444 (LEVTTYYGEGMSPLTITKDAL) the chain is Cytoplasmic. A helical transmembrane segment spans residues 445-465 (ISILGFMGFVVGTYQALDELI). The Extracellular portion of the chain corresponds to 466–481 (RSGNSLPLSNSTMFIQ).

Belongs to the amino acid/polyamine transporter 2 family. In terms of tissue distribution, expressed in lung and spleen, and to a lower extent in brain, heart, kidney and skeletal muscle.

Its subcellular location is the cell membrane. The protein localises to the endoplasmic reticulum membrane. The protein resides in the recycling endosome membrane. It carries out the reaction glycine(in) + H(+)(in) = glycine(out) + H(+)(out). The enzyme catalyses L-alanine(in) + H(+)(in) = L-alanine(out) + H(+)(out). The catalysed reaction is D-alanine(in) + H(+)(in) = D-alanine(out) + H(+)(out). It catalyses the reaction L-proline(out) + H(+)(out) = L-proline(in) + H(+)(in). It carries out the reaction D-proline(out) + H(+)(out) = D-proline(in) + H(+)(in). The enzyme catalyses 4-hydroxy-L-proline(in) + H(+)(in) = 4-hydroxy-L-proline(out) + H(+)(out). The catalysed reaction is L-serine(in) + H(+)(in) = L-serine(out) + H(+)(out). It catalyses the reaction D-serine(out) + H(+)(out) = D-serine(in) + H(+)(in). It carries out the reaction beta-alanine(in) + H(+)(in) = beta-alanine(out) + H(+)(out). The enzyme catalyses 4-aminobutanoate(in) + H(+)(in) = 4-aminobutanoate(out) + H(+)(out). The catalysed reaction is sarcosine(in) + H(+)(in) = sarcosine(out) + H(+)(out). It catalyses the reaction N,N-dimethylglycine(in) + H(+)(in) = N,N-dimethylglycine(out) + H(+)(out). Inhibited by L- and D-pipecolic acid, nipecotic acid, isonipecotic acid, L- and D-cycloserine, and L-2-azetidine-carboxylate. In terms of biological role, electrogenic proton/amino acid symporter with a high selectivity for the small side chains amino acids glycine, alanine and proline, where both L- and D-enantiomers are transported. Extension of the backbone length, as in beta-alanine and 4-aminobutanoate or methylation of the amino group, as in sarcosine and N,N-dimethylglycine, are also tolerated but decrease transport efficiency. A free carboxyl group is preferred. This is Proton-coupled amino acid transporter 2 from Rattus norvegicus (Rat).